Consider the following 508-residue polypeptide: MAGNQQLRVLHALDIARTQLYHFIAIVIAGMGFFTDAYDLFSISLVADLLGHVYYHGELPRNIHAAVTGIALCGTVPGQLVFGWLGDKMGRKRVYGITLLLMVVSSLASGLSFSKHEGMNIIAVLCFFRFWLGVSIGGDYPLSATIMSEYANKRTRGAFIAAVFAMQGFGNLAAGIIGMIVSAAFKHSSASKIDYAWRIILMFGAIPAALTYHWRMKMPETARYTALISKNAKKAAKDMSAVLNVNITPDDEVINELARQDEYGLFSFEFLHRHGLHLLGTTVCWFVLDVTFYSLNIFMKNIFTEVGLLPRLDSEYHHTLQRMITMTAVHTFISLCGALPGYFFTVAFVDRIGRVKIQLIGFTMMTVFMLCLAIPYDQWLRHKNKYGFAVMYGLTFFFANFGPNTTTFIIPAEIFPARLRSTCHGISGAVGKIGAIVGVFGFLYTEYHIRIFLFVLIGCNLVGFIFTLLLPESKGKSLEDLTGEIEEFQEEDEGSEVALSRPIHTVPL.

At 1–22 (MAGNQQLRVLHALDIARTQLYH) the chain is on the cytoplasmic side. Residues 23–43 (FIAIVIAGMGFFTDAYDLFSI) form a helical membrane-spanning segment. The Extracellular portion of the chain corresponds to 44-64 (SLVADLLGHVYYHGELPRNIH). Residues 65–85 (AAVTGIALCGTVPGQLVFGWL) form a helical membrane-spanning segment. Topologically, residues 86 to 93 (GDKMGRKR) are cytoplasmic. The helical transmembrane segment at 94 to 114 (VYGITLLLMVVSSLASGLSFS) threads the bilayer. Residues 115–117 (KHE) are Extracellular-facing. Residues 118–138 (GMNIIAVLCFFRFWLGVSIGG) traverse the membrane as a helical segment. Topologically, residues 139–159 (DYPLSATIMSEYANKRTRGAF) are cytoplasmic. Residues 160 to 180 (IAAVFAMQGFGNLAAGIIGMI) form a helical membrane-spanning segment. Topologically, residues 181-192 (VSAAFKHSSASK) are extracellular. Residues 193-213 (IDYAWRIILMFGAIPAALTYH) form a helical membrane-spanning segment. The Cytoplasmic portion of the chain corresponds to 214 to 277 (WRMKMPETAR…FEFLHRHGLH (64 aa)). A helical membrane pass occupies residues 278–298 (LLGTTVCWFVLDVTFYSLNIF). Over 299-328 (MKNIFTEVGLLPRLDSEYHHTLQRMITMTA) the chain is Extracellular. The helical transmembrane segment at 329 to 349 (VHTFISLCGALPGYFFTVAFV) threads the bilayer. The Cytoplasmic portion of the chain corresponds to 350-354 (DRIGR). Residues 355 to 375 (VKIQLIGFTMMTVFMLCLAIP) traverse the membrane as a helical segment. Topologically, residues 376 to 389 (YDQWLRHKNKYGFA) are extracellular. The helical transmembrane segment at 390-410 (VMYGLTFFFANFGPNTTTFII) threads the bilayer. Residues 411–424 (PAEIFPARLRSTCH) are Cytoplasmic-facing. A helical transmembrane segment spans residues 425–445 (GISGAVGKIGAIVGVFGFLYT). The Extracellular segment spans residues 446–450 (EYHIR). A helical membrane pass occupies residues 451–471 (IFLFVLIGCNLVGFIFTLLLP). Residues 472–508 (ESKGKSLEDLTGEIEEFQEEDEGSEVALSRPIHTVPL) lie on the Cytoplasmic side of the membrane.

Belongs to the major facilitator superfamily. Phosphate:H(+) symporter (TC 2.A.1.9) family.

It localises to the membrane. In terms of biological role, high-affinity transporter for external inorganic phosphate. In Oryza sativa subsp. japonica (Rice), this protein is Putative inorganic phosphate transporter 1-13 (PHT1-13).